Consider the following 305-residue polypeptide: MKKIIFMGTPSYATCILKALVENENFKLVALFTQPDKAVGRKQILTPSDTKAFLSQNYPSIPIFTPSSLKDENIIREIKDLNPDFIVVAAYGKILPKAILDLVPCVNLHASLLPKYRGASPIQSAILNKDEKSGVCTMLMEEGLDTGAILESLECDIKDKNSSEVFELLANLAAKLILTTLLNFDKITPKKQEESLATLCRKIKKEDGLINLQNARELYQKYLAFTPWPGVFLENGLKFLELELVDELKQNARMGEILELEKESFLLACKQGVLRIKKLQESGKKALDGRTYLNGKRLKSEDSLC.

A (6S)-5,6,7,8-tetrahydrofolate-binding site is contributed by 111 to 114 (SLLP).

Belongs to the Fmt family.

The catalysed reaction is L-methionyl-tRNA(fMet) + (6R)-10-formyltetrahydrofolate = N-formyl-L-methionyl-tRNA(fMet) + (6S)-5,6,7,8-tetrahydrofolate + H(+). Functionally, attaches a formyl group to the free amino group of methionyl-tRNA(fMet). The formyl group appears to play a dual role in the initiator identity of N-formylmethionyl-tRNA by promoting its recognition by IF2 and preventing the misappropriation of this tRNA by the elongation apparatus. The sequence is that of Methionyl-tRNA formyltransferase from Campylobacter jejuni subsp. jejuni serotype O:23/36 (strain 81-176).